A 168-amino-acid chain; its full sequence is Co-chaperone protein HscB homolog (168 aa).

Residues 5–77 (DYFSLFGLPS…MLRARYLCES (73 aa)) form the J domain.

It belongs to the HscB family. As to quaternary structure, interacts with HscA and stimulates its ATPase activity.

In terms of biological role, co-chaperone involved in the maturation of iron-sulfur cluster-containing proteins. Seems to help targeting proteins to be folded toward HscA. The sequence is that of Co-chaperone protein HscB homolog from Bordetella avium (strain 197N).